A 434-amino-acid polypeptide reads, in one-letter code: Lecithin-cholesterol acyltransferase-like 1 (434 aa).

Residue S191 is the Acyl-ester intermediate of the active site. Residues D354 and H386 each act as charge relay system in the active site.

The protein belongs to the AB hydrolase superfamily. Lipase family.

The polypeptide is Lecithin-cholesterol acyltransferase-like 1 (Oryza sativa subsp. japonica (Rice)).